A 470-amino-acid chain; its full sequence is E3 ubiquitin-protein ligase TRIM21 (470 aa).

Residues 20-59 (CSICLDPMVEPMSIECGHCFCKECIFEVGKNGGSSCPECR) form an RING-type zinc finger. Zn(2+) is bound by residues C96, H99, C118, and H124. The segment at 96-127 (CMKHGEKLHLFCEEDGQALCWVCAQSGKHRDH) adopts a B box-type zinc-finger fold. The stretch at 188–250 (LQNSLLAQEE…RGSELELLQE (63 aa)) forms a coiled coil. The B30.2/SPRY domain occupies 272–470 (DLTSTCPVPG…APLKLCPLKM (199 aa)).

The protein belongs to the TRIM/RBCC family. Homotrimer. Component of a SCF(SKP2)-like complex containing CUL1, SKP1, TRIM21 and SKP2. Interacts with CALR, CUL1, FBXW11, HSPA5, IKBKB, IRF3, SKP1 and VCP. Interacts with SKP2; the interaction with SKP2 does not depend on an intact F-box domain. Interacts (via N-terminus and C-terminus) with DCP2 (via N-terminus and C-terminus). Interacts (via C-terminus) with IRF8 (via C-terminus). Interacts with ULK1, BECN1 and with ATG8 family members, including GABARAP, GABARAPL1, GABARAPL2 and MAP1LC3C/LC3C. Interacts with TRIM21 and SQSTM1/sequestosome 1. Interacts with IRF3. Interacts (via the SPRY domain) with NMI (via coiled-coil domain); the interaction promotes 'Lys-63'-linked ubiquitination of NMI. Interacts with IFI35 and NMI; the interaction facilitates NMI-IFI35 complex formation. In terms of processing, autoubiquitinated; does not lead to its proteasomal degradation. Deubiquitinated by USP4; leading to its stabilization. Autoubiquitinated.

Its subcellular location is the cytoplasm. It localises to the cytoplasmic vesicle. The protein resides in the autophagosome. The protein localises to the nucleus. It is found in the P-body. Its subcellular location is the stress granule. The enzyme catalyses S-ubiquitinyl-[E2 ubiquitin-conjugating enzyme]-L-cysteine + [acceptor protein]-L-lysine = [E2 ubiquitin-conjugating enzyme]-L-cysteine + N(6)-ubiquitinyl-[acceptor protein]-L-lysine.. The protein operates within protein modification; protein ubiquitination. Functionally, E3 ubiquitin-protein ligase whose activity is dependent on E2 enzymes, UBE2D1, UBE2D2, UBE2E1 and UBE2E2. Forms a ubiquitin ligase complex in cooperation with the E2 UBE2D2 that is used not only for the ubiquitination of USP4 and IKBKB but also for its self-ubiquitination. Component of cullin-RING-based SCF (SKP1-CUL1-F-box protein) E3 ubiquitin-protein ligase complexes such as SCF(SKP2)-like complexes. A TRIM21-containing SCF(SKP2)-like complex is shown to mediate ubiquitination of CDKN1B ('Thr-187' phosphorylated-form), thereby promoting its degradation by the proteasome. Monoubiquitinates IKBKB that will negatively regulates Tax-induced NF-kappa-B signaling. Negatively regulates IFN-beta production post-pathogen recognition by catalyzing polyubiquitin-mediated degradation of IRF3. Mediates the ubiquitin-mediated proteasomal degradation of IgG1 heavy chain, which is linked to the VCP-mediated ER-associated degradation (ERAD) pathway. Promotes IRF8 ubiquitination, which enhanced the ability of IRF8 to stimulate cytokine genes transcription in macrophages. Plays a role in the regulation of the cell cycle progression. Enhances the decapping activity of DCP2. Exists as a ribonucleoprotein particle present in all mammalian cells studied and composed of a single polypeptide and one of four small RNA molecules. At least two isoforms are present in nucleated and red blood cells, and tissue specific differences in RO/SSA proteins have been identified. The common feature of these proteins is their ability to bind HY RNAs.2. Involved in the regulation of innate immunity and the inflammatory response in response to IFNG/IFN-gamma. Organizes autophagic machinery by serving as a platform for the assembly of ULK1, Beclin 1/BECN1 and ATG8 family members and recognizes specific autophagy targets, thus coordinating target recognition with assembly of the autophagic apparatus and initiation of autophagy. Also regulates autophagy through FIP200/RB1CC1 ubiquitination and subsequent decreased protein stability. Represses the innate antiviral response by facilitating the formation of the NMI-IFI35 complex through 'Lys-63'-linked ubiquitination of NMI. During viral infection, promotes cell pyroptosis by mediating 'Lys-6'-linked ubiquitination of ISG12a/IFI27, facilitating its translocation into the mitochondria and subsequent CASP3 activation. When up-regulated through the IFN/JAK/STAT signaling pathway, promotes 'Lys-27'-linked ubiquitination of MAVS, leading to the recruitment of TBK1 and up-regulation of innate immunity. Mediates 'Lys-63'-linked polyubiquitination of G3BP1 in response to heat shock, leading to stress granule disassembly. The polypeptide is E3 ubiquitin-protein ligase TRIM21 (Trim21) (Mus musculus (Mouse)).